The chain runs to 366 residues: Aminomethyltransferase (366 aa).

The protein belongs to the GcvT family. The glycine cleavage system is composed of four proteins: P, T, L and H.

It catalyses the reaction N(6)-[(R)-S(8)-aminomethyldihydrolipoyl]-L-lysyl-[protein] + (6S)-5,6,7,8-tetrahydrofolate = N(6)-[(R)-dihydrolipoyl]-L-lysyl-[protein] + (6R)-5,10-methylene-5,6,7,8-tetrahydrofolate + NH4(+). Functionally, the glycine cleavage system catalyzes the degradation of glycine. The chain is Aminomethyltransferase from Bordetella petrii (strain ATCC BAA-461 / DSM 12804 / CCUG 43448).